We begin with the raw amino-acid sequence, 449 residues long: Glucose-6-phosphate isomerase 1 (449 aa).

Position 38 is a phosphothreonine (T38). The active-site Proton donor is E290. Active-site residues include H311 and K425.

Belongs to the GPI family. As to quaternary structure, homodimer.

The protein localises to the cytoplasm. The enzyme catalyses alpha-D-glucose 6-phosphate = beta-D-fructose 6-phosphate. Its pathway is carbohydrate biosynthesis; gluconeogenesis. The protein operates within carbohydrate degradation; glycolysis; D-glyceraldehyde 3-phosphate and glycerone phosphate from D-glucose: step 2/4. In terms of biological role, catalyzes the reversible isomerization of glucose-6-phosphate to fructose-6-phosphate. In Geobacillus stearothermophilus (Bacillus stearothermophilus), this protein is Glucose-6-phosphate isomerase 1.